The following is a 727-amino-acid chain: NHL repeat-containing protein 2 (727 aa).

Residues 43–198 (RERDLTVPEL…TLKFYKERGQ (156 aa)) enclose the Thioredoxin domain. NHL repeat units lie at residues 207 to 249 (KLYK…TLKN), 260 to 302 (NSGR…IDLE), 330 to 364 (ISSPWDVVFGNSVSGTQEDDVLWIAMAGIHQVWAL), 404 to 434 (FAQPSGLSLASEEPWNCLFVADSESSTVRMI), 456 to 500 (AFGD…VDPK), and 513 to 557 (ASNV…LDLE).

In terms of assembly, monomer.

The protein localises to the cytoplasm. It localises to the cytosol. Functionally, required for normal embryonic development. The polypeptide is NHL repeat-containing protein 2 (NHLRC2) (Gallus gallus (Chicken)).